Here is a 190-residue protein sequence, read N- to C-terminus: dCTP deaminase (190 aa).

DCTP-binding positions include 111–116, 135–137, Q156, Y172, and Q182; these read KSTYAR and TLE. The Proton donor/acceptor role is filled by E137.

The protein belongs to the dCTP deaminase family. In terms of assembly, homotrimer.

It catalyses the reaction dCTP + H2O + H(+) = dUTP + NH4(+). The protein operates within pyrimidine metabolism; dUMP biosynthesis; dUMP from dCTP (dUTP route): step 1/2. Functionally, catalyzes the deamination of dCTP to dUTP. The chain is dCTP deaminase from Stenotrophomonas maltophilia (strain K279a).